The following is a 291-amino-acid chain: MKSEAKDGEEESLQTAFKKLRVDASGSIISLSVGEGPSVRASARTAADDTKPKTMCASKDSWHGSTRKSSRGAVRTQRRRRSKSPVLHPPKFIHCSTTAPPSSSQLKHRSQTEPPDGISGRGISTPKEFNAGENSTSLDVNHTGAAIEPLRSSVLRLPSESKTEELSDATQVSQESLTANDLSDFQSVSKLSQGKPCVCVGKECQCKRWHDMEVYSFSGLQNVPPLAPERRSLEDYSQSLHTRTLSGSPRSCSEQARVYVDDVTIEDLAGYMEYYLYIPKKMSHMAEMMYT.

A disordered region spans residues 29-139 (ISLSVGEGPS…NAGENSTSLD (111 aa)). The span at 65-83 (STRKSSRGAVRTQRRRRSK) shows a compositional bias: basic residues. Positions 95-105 (CSTTAPPSSSQ) are enriched in polar residues. Residue Thr-143 is modified to Phosphothreonine.

The sequence is that of Oxidative stress-responsive serine-rich protein 1 (Oser1) from Mus musculus (Mouse).